The primary structure comprises 305 residues: Peroxidase A2 (305 aa).

Residue Gln1 is modified to Pyrrolidone carboxylic acid. 2 N-linked (GlcNAc...) asparagine glycosylation sites follow: Asn3 and Asn13. 4 cysteine pairs are disulfide-bonded: Cys11-Cys91, Cys44-Cys49, Cys97-Cys299, and Cys176-Cys208. The Proton acceptor role is filled by His42. Positions 43, 46, 48, 50, and 52 each coordinate Ca(2+). Pro139 serves as a coordination point for substrate. The N-linked (GlcNAc...) asparagine glycan is linked to Asn147. A heme b-binding site is contributed by His169. A Ca(2+)-binding site is contributed by Thr170. Residues Asn185, Asn197, and Asn211 are each glycosylated (N-linked (GlcNAc...) asparagine). Asp221, Thr224, and Asp229 together coordinate Ca(2+). N-linked (GlcNAc...) asparagine glycosylation is present at Asn267.

This sequence belongs to the peroxidase family. Classical plant (class III) peroxidase subfamily. The cofactor is Ca(2+). It depends on heme b as a cofactor.

It catalyses the reaction 2 a phenolic donor + H2O2 = 2 a phenolic radical donor + 2 H2O. Removal of H(2)O(2), oxidation of toxic reductants, biosynthesis and degradation of lignin, suberization, auxin catabolism, response to environmental stresses such as wounding, pathogen attack and oxidative stress. These functions might be dependent on each isozyme/isoform in each plant tissue. This is Peroxidase A2 (HRPA2) from Armoracia rusticana (Horseradish).